The chain runs to 214 residues: Adenylate kinase (214 aa).

10 to 15 (GAGKGT) contacts ATP. The NMP stretch occupies residues 30–59 (STGDMFRAAIKEGTELGKQAKALMDEGKLV). Residues Thr31, Arg36, 57 to 59 (KLV), 85 to 88 (GFPR), and Gln92 each bind AMP. The LID stretch occupies residues 122-159 (GRRVHQPSGRTYHVVYNPPKVEGKDDVTGEDLIIRQDD). ATP contacts are provided by residues Arg123 and 132–133 (TY). AMP is bound by residues Arg156 and Arg167. Lys200 is a binding site for ATP.

The protein belongs to the adenylate kinase family. As to quaternary structure, monomer.

The protein localises to the cytoplasm. It carries out the reaction AMP + ATP = 2 ADP. The protein operates within purine metabolism; AMP biosynthesis via salvage pathway; AMP from ADP: step 1/1. Its function is as follows. Catalyzes the reversible transfer of the terminal phosphate group between ATP and AMP. Plays an important role in cellular energy homeostasis and in adenine nucleotide metabolism. The protein is Adenylate kinase of Actinobacillus pleuropneumoniae serotype 5b (strain L20).